The following is a 394-amino-acid chain: Elongation factor Tu (394 aa).

The tr-type G domain occupies 10–204; sequence KPHVNVGTIG…ALDTYIPEPE (195 aa). Residues 19 to 26 form a G1 region; it reads GHVDHGKT. 19–26 is a GTP binding site; that stretch reads GHVDHGKT. Thr-26 contacts Mg(2+). Residues 60–64 are G2; sequence GITIN. Residues 81-84 are G3; the sequence is DCPG. GTP contacts are provided by residues 81-85 and 136-139; these read DCPGH and NKCD. The G4 stretch occupies residues 136 to 139; the sequence is NKCD. Positions 174–176 are G5; sequence SAL.

It belongs to the TRAFAC class translation factor GTPase superfamily. Classic translation factor GTPase family. EF-Tu/EF-1A subfamily. As to quaternary structure, monomer.

It is found in the cytoplasm. It carries out the reaction GTP + H2O = GDP + phosphate + H(+). Functionally, GTP hydrolase that promotes the GTP-dependent binding of aminoacyl-tRNA to the A-site of ribosomes during protein biosynthesis. The sequence is that of Elongation factor Tu from Shewanella halifaxensis (strain HAW-EB4).